The chain runs to 437 residues: MKTTHITEQKFADLGLEPTVLEGLDAQGFHYCTPIQALALPVVLTGQDIAGQAQTGTGKTLAFLTATFNYLLLNPASDERKTNQPRAIIMAPTRELAIQIYNDAAPLLASTGLKAGLAYGGEAYEKQQKVFAEGVDILIGTCGRIIDFYKQRVIDLASIQVVVLDEADRMFDLGFIKDIRFLFRRMPAPKARLNMLFSATLSYRVKELAFEHMNSPESVVVEPNQKTGHLIQEELFYPSNQEKMRLLQTLIEEEWPDRAIIFANTKHRCEDIWGHLAADNHRVGLLNGDVPQKKRVRILEQFTQGDIDILVATDVAARGLHIPQVTHVYNYDLPDDAEDYVHRIGRTGRAGESGSSISFACEEYAINLPAIETYIEHPIPLSKYNSEALLDELPAPLRLQRTPRQGGNRRPNGNRQGQGQSRPRNNNRRHPQSQKQQ.

Positions 9–37 (QKFADLGLEPTVLEGLDAQGFHYCTPIQA) match the Q motif motif. Positions 40–219 (LPVVLTGQDI…FEHMNSPESV (180 aa)) constitute a Helicase ATP-binding domain. 53-60 (AQTGTGKT) is a binding site for ATP. Residues 165–168 (DEAD) carry the DEAD box motif. In terms of domain architecture, Helicase C-terminal spans 245-390 (RLLQTLIEEE…LSKYNSEALL (146 aa)). Residues 395–437 (APLRLQRTPRQGGNRRPNGNRQGQGQSRPRNNNRRHPQSQKQQ) form a disordered region. The segment covering 400–424 (QRTPRQGGNRRPNGNRQGQGQSRPR) has biased composition (low complexity). The span at 425–437 (NNNRRHPQSQKQQ) shows a compositional bias: basic residues.

Belongs to the DEAD box helicase family. RhlB subfamily. Component of the RNA degradosome, which is a multiprotein complex involved in RNA processing and mRNA degradation.

Its subcellular location is the cytoplasm. It catalyses the reaction ATP + H2O = ADP + phosphate + H(+). Functionally, DEAD-box RNA helicase involved in RNA degradation. Has RNA-dependent ATPase activity and unwinds double-stranded RNA. The polypeptide is ATP-dependent RNA helicase RhlB (Photobacterium profundum (strain SS9)).